The primary structure comprises 245 residues: 8-amino-3,8-dideoxy-manno-octulosonate cytidylyltransferase (245 aa).

This sequence belongs to the KdsB family.

It localises to the cytoplasm. It carries out the reaction 8-amino-3,8-dideoxy-alpha-D-manno-octulosonate + CTP = CMP-8-amino-3,8-dideoxy-alpha-D-manno-oct-2-ulosonate + diphosphate. Its pathway is bacterial outer membrane biogenesis; lipopolysaccharide biosynthesis. Functionally, activates KDO8N (a required 8-carbon sugar) for incorporation into bacterial lipopolysaccharide in the Shewanella genus. In Shewanella oneidensis (strain ATCC 700550 / JCM 31522 / CIP 106686 / LMG 19005 / NCIMB 14063 / MR-1), this protein is 8-amino-3,8-dideoxy-manno-octulosonate cytidylyltransferase.